The following is a 215-amino-acid chain: Large ribosomal subunit protein uL16 (215 aa).

Belongs to the universal ribosomal protein uL16 family. In terms of assembly, component of the large ribosomal subunit.

The protein resides in the cytoplasm. In terms of biological role, component of the large ribosomal subunit. Plays a role in the formation of actively translating ribosomes. Plays a role in the embryonic brain development. This is Large ribosomal subunit protein uL16 from Danio rerio (Zebrafish).